The sequence spans 70 residues: DNA-directed RNA polymerase subunit omega (70 aa).

This sequence belongs to the RNA polymerase subunit omega family. As to quaternary structure, the RNAP catalytic core consists of 2 alpha, 1 beta, 1 beta' and 1 omega subunit. When a sigma factor is associated with the core the holoenzyme is formed, which can initiate transcription.

It catalyses the reaction RNA(n) + a ribonucleoside 5'-triphosphate = RNA(n+1) + diphosphate. Promotes RNA polymerase assembly. Latches the N- and C-terminal regions of the beta' subunit thereby facilitating its interaction with the beta and alpha subunits. This Pelobacter propionicus (strain DSM 2379 / NBRC 103807 / OttBd1) protein is DNA-directed RNA polymerase subunit omega.